The following is a 78-amino-acid chain: Large ribosomal subunit protein bL28 (78 aa).

Residues 1-26 (MARVCQVTGKRPMSGHNVSHANNKTK) form a disordered region.

It belongs to the bacterial ribosomal protein bL28 family.

The protein is Large ribosomal subunit protein bL28 of Nitrosomonas europaea (strain ATCC 19718 / CIP 103999 / KCTC 2705 / NBRC 14298).